The sequence spans 113 residues: Tyrosine-protein phosphatase 15 (113 aa).

The Tyrosine-protein phosphatase domain occupies 1–113; sequence WRMVYDNNVN…RSTGDGVALI (113 aa).

Belongs to the protein-tyrosine phosphatase family.

The enzyme catalyses O-phospho-L-tyrosyl-[protein] + H2O = L-tyrosyl-[protein] + phosphate. This is Tyrosine-protein phosphatase 15 (STY-15) from Styela plicata (Wrinkled sea squirt).